Here is a 495-residue protein sequence, read N- to C-terminus: Meiosis-specific nuclear structural protein 1 (495 aa).

Residues 1 to 315 (MASIRRTLSF…RLEEMLRQRE (315 aa)) form an interaction with BBOF1 region. 2 coiled-coil regions span residues 61 to 215 (QDEQ…EKLM) and 245 to 361 (IEEF…QMAL). Positions 172–199 (EESAAEDKRNQAKAQYSHDLEKQLEEQG) are disordered.

The protein belongs to the MNS1 family. As to quaternary structure, able to form oligomers. Microtubule inner protein component of sperm flagellar doublet microtubules. Interacts with ODAD1. Interacts with BBOF1. As to expression, expressed in trachea multiciliated cells.

The protein localises to the nucleus. The protein resides in the cytoplasm. It is found in the cytoskeleton. Its subcellular location is the cilium axoneme. It localises to the flagellum axoneme. Microtubule inner protein (MIP) part of the dynein-decorated doublet microtubules (DMTs) in cilia axoneme, which is required for motile cilia beating. May play a role in the control of meiotic division and germ cell differentiation through regulation of pairing and recombination during meiosis. Required for sperm flagella assembly. May play a role in the assembly and function of the outer dynein arm-docking complex (ODA-DC). ODA-DC mediates outer dynein arms (ODA) binding onto the axonemal doublet microtubules. In Bos taurus (Bovine), this protein is Meiosis-specific nuclear structural protein 1 (MNS1).